The following is a 502-amino-acid chain: Adenylate cyclase (502 aa).

At 1–25 the chain is on the cytoplasmic side; sequence MGDFCRRVDCKAMKFFALRSSIRTQ. A helical membrane pass occupies residues 26 to 46; it reads IMASTTLLILALIGAIVTVWA. Topologically, residues 47–203 are lumenal, thylakoid; sequence KSESTLYHQE…RKVNLAVTNA (157 aa). The chain crosses the membrane as a helical span at residues 204–226; sequence VNQALVVGFAGLNIGWICAYFLA. The HAMP domain maps to 227-280; that stretch reads QHLSDPVRRLQISVAKIAGGDLQHRADIHSRADEIGALATSVNEMSAALQISFN. Residues 227 to 502 are Cytoplasmic-facing; that stretch reads QHLSDPVRRL…EAISIYEVKA (276 aa). Residues 320-451 form the Guanylate cyclase domain; that stretch reads TILFCDIRGY…DAVNVASRIE (132 aa). Residues aspartate 325 and aspartate 369 each coordinate Mg(2+).

The protein belongs to the adenylyl cyclase class-3 family. The cofactor is Mg(2+).

The protein localises to the cellular thylakoid membrane. It carries out the reaction ATP = 3',5'-cyclic AMP + diphosphate. Functionally, may function as a membrane-localized receptor protein. The chain is Adenylate cyclase (cya) from Anabaena cylindrica.